The following is a 166-amino-acid chain: Emerin homolog 1 (166 aa).

The LEM domain maps to 1–44; sequence MDVSQLTDAELRDSLKSHGVSVGPIVATTRKLYEKKLIKLSDGS. Over 1–127 the chain is Nuclear; sequence MDVSQLTDAE…QAQSNKGGFL (127 aa). Residues 62–99 are disordered; sequence IISSSPKKSPPQRVFQNVSAATAAATTSPESDSDDCEE. A helical membrane pass occupies residues 128-148; it reads GSTITFTILFVFIAVFAYFLI. The Perinuclear space portion of the chain corresponds to 149–166; it reads ENAEQLKLVAETNPEDTI.

As to quaternary structure, interacts with lmn-1 and baf-1. Ubiquitous. Expressed in all cells, except in cells undergoing spermatogenesis. High expression in hypodermis, neurons, pharyngeal muscle, body wall muscle and gonadal sheath.

The protein localises to the nucleus inner membrane. Its subcellular location is the nucleus envelope. Its function is as follows. Nuclear lamina-associated inner nuclear membrane protein that is involved in cell division, nuclear structure organization, maintenance of nuclear envelope integrity and nuclear envelope reformation after mitosis. Involved in chromosome segregation and cell division, probably via its interaction with the nuclear intermediate filament protein lmn-1, the main component of nuclear lamina. Required to organize the distribution of lmn-1, nuclear pore complexes (NPCs) and chromatin in mitotically active cells. Together with lem-2, plays a role in baf-1 enrichment at the nuclear envelope in anaphase. Together with lem-2, involved in muscle cell attachment to hypodermal cells, as well as muscle cell location and sarcomere organization. May play a role in radiation-induced DNA damage repair response. May repress binding of transcription factor pha-4 with target sequences in pharyngeal cells. The chain is Emerin homolog 1 (emr-1) from Caenorhabditis elegans.